The sequence spans 89 residues: Sodium channel toxin To13 (89 aa).

The first 18 residues, 1–18, serve as a signal peptide directing secretion; sequence MKTLFLIITSFILLEVEG. An LCN-type CS-alpha/beta domain is found at 20–87; it reads KNGYPRDSKG…TWKNKEPKCK (68 aa). Cystine bridges form between Cys30–Cys86, Cys34–Cys60, Cys45–Cys67, and Cys49–Cys69.

Belongs to the long (4 C-C) scorpion toxin superfamily. Sodium channel inhibitor family. In terms of tissue distribution, expressed by the venom gland.

The protein localises to the secreted. Functionally, inhibits voltage-gated sodium channels (Nav). This Tityus obscurus (Amazonian scorpion) protein is Sodium channel toxin To13.